The chain runs to 415 residues: Glycerate 2-kinase (415 aa).

Lysine 57 lines the substrate pocket.

Belongs to the glycerate kinase type-1 family. As to quaternary structure, homodimer. Requires Mg(2+) as cofactor. Ni(2+) serves as cofactor. It depends on Mn(2+) as a cofactor. Co(2+) is required as a cofactor.

The enzyme catalyses (R)-glycerate + ATP = (2R)-2-phosphoglycerate + ADP + H(+). In terms of biological role, catalyzes the ATP-dependent phosphorylation of D-glycerate to 2-phosphoglycerate. It can also partially utilize GTP, CTP or UTP as phosphate donor. This Picrophilus torridus (strain ATCC 700027 / DSM 9790 / JCM 10055 / NBRC 100828 / KAW 2/3) protein is Glycerate 2-kinase (gck).